Consider the following 148-residue polypeptide: uncharacterized protein (148 aa).

Residues I3 to E64 form the HTH asnC-type domain. Residues Y22–K41 constitute a DNA-binding region (H-T-H motif).

This is an uncharacterized protein from Pyrococcus furiosus (strain ATCC 43587 / DSM 3638 / JCM 8422 / Vc1).